The primary structure comprises 465 residues: Zinc finger and BTB domain-containing protein 32 (465 aa).

Residues 29 to 87 form the BTB domain; sequence CDTLITVGGLEFPAHSLVLAGASPRLGCRGRWALVEDISPSTFAQILTFVYGESIELQP. Disordered regions lie at residues 111–179 and 285–310; these read RAQK…EMAG and QNQLASSSPTPGSFPQGTESLSPWQI. Composition is skewed to basic and acidic residues over residues 123–139 and 147–176; these read PGLKRHQQSEDFMRGSE and EKQKPEKDFRSNGREQEMSHKHKAPGERPE. C2H2-type zinc fingers lie at residues 350-372, 378-400, and 405-427; these read YSCSVCGKRFSLKHQMETHYRVH, FSCSLCPQRSRDFSAMTKHLRTH, and YRCPLCRAGCPSLASMQAHMRGH.

It belongs to the krueppel C2H2-type zinc-finger protein family. Homodimer (via PTB domain). Interacts with the N-terminal of FANCC. Interacts with ZBTB16. Interacts with GATA3. As to expression, isoform 1 is testis-specific and is not expressed in lymphoid organs such as thymus or spleen. Isoform 2 is expressed in both B- and T-lymphoid cells.

Its subcellular location is the nucleus. Its function is as follows. DNA-binding protein that binds to the to a 5'-TGTACAGTGT-3' core sequence. May function as a transcriptional transactivator and transcriptional repressor. Probably exerts its repressor effect by preventing GATA3 from binding to DNA. May play a role in regulating the differentiation and activation of helper T-cells. The polypeptide is Zinc finger and BTB domain-containing protein 32 (Zbtb32) (Mus musculus (Mouse)).